The primary structure comprises 186 residues: Dirigent protein 7 (186 aa).

An N-terminal signal peptide occupies residues 1-21 (MAKLILIIVTQILLIAAVVSA). Asparagine 70, asparagine 91, and asparagine 126 each carry an N-linked (GlcNAc...) asparagine glycan.

It belongs to the plant dirigent protein family. As to quaternary structure, homodimer.

Its subcellular location is the secreted. The protein localises to the extracellular space. The protein resides in the apoplast. Dirigent proteins impart stereoselectivity on the phenoxy radical-coupling reaction, yielding optically active lignans from two molecules of coniferyl alcohol in the biosynthesis of lignans, flavonolignans, and alkaloids and thus plays a central role in plant secondary metabolism. This chain is Dirigent protein 7 (DIR7), found in Arabidopsis thaliana (Mouse-ear cress).